Here is a 217-residue protein sequence, read N- to C-terminus: UPF0319 protein VS_II0881 (217 aa).

The first 21 residues, 1 to 21, serve as a signal peptide directing secretion; the sequence is MKTIQSIALLSAIVAAPSVLA.

The protein belongs to the UPF0319 family.

This Vibrio atlanticus (strain LGP32) (Vibrio splendidus (strain Mel32)) protein is UPF0319 protein VS_II0881.